Consider the following 220-residue polypeptide: MTKGILGRKIGMTQVFGENGELIPVTVVEASQNVVLQKKTEEVDGYNAIQVGFEDKKAYKKDAKSNKYANKPAEGHAKKAGAAPKRFIREFRNVNVDEYEVGQEVTVDTFEAGDIIDVTGTSKGKGFQGAIKRHGQARGPMAHGSHFHRAPGSVGMASDASRVFKGQKMPGRMGGNTVTVQNLEVVQVDTENNVILVKGNVPGPKKGFVEIQTSIKKGNK.

The protein belongs to the universal ribosomal protein uL3 family. As to quaternary structure, part of the 50S ribosomal subunit. Forms a cluster with proteins L14 and L19.

Its function is as follows. One of the primary rRNA binding proteins, it binds directly near the 3'-end of the 23S rRNA, where it nucleates assembly of the 50S subunit. The sequence is that of Large ribosomal subunit protein uL3 from Staphylococcus haemolyticus (strain JCSC1435).